We begin with the raw amino-acid sequence, 236 residues long: 2-C-methyl-D-erythritol 4-phosphate cytidylyltransferase (236 aa).

The protein belongs to the IspD/TarI cytidylyltransferase family. IspD subfamily.

The catalysed reaction is 2-C-methyl-D-erythritol 4-phosphate + CTP + H(+) = 4-CDP-2-C-methyl-D-erythritol + diphosphate. It participates in isoprenoid biosynthesis; isopentenyl diphosphate biosynthesis via DXP pathway; isopentenyl diphosphate from 1-deoxy-D-xylulose 5-phosphate: step 2/6. Functionally, catalyzes the formation of 4-diphosphocytidyl-2-C-methyl-D-erythritol from CTP and 2-C-methyl-D-erythritol 4-phosphate (MEP). This is 2-C-methyl-D-erythritol 4-phosphate cytidylyltransferase from Burkholderia vietnamiensis (strain G4 / LMG 22486) (Burkholderia cepacia (strain R1808)).